The sequence spans 382 residues: FK506-binding protein 4 (382 aa).

A disordered region spans residues Gly139–Lys274. Acidic residues predominate over residues Glu141 to Pro173. Composition is skewed to basic and acidic residues over residues Arg180–Ser190 and Glu196–Lys270. Positions Gly295 to Lys382 constitute a PPIase FKBP-type domain.

It belongs to the FKBP-type PPIase family. FKBP3/4 subfamily. As to quaternary structure, binds to histones H3 and H4.

It is found in the nucleus. The enzyme catalyses [protein]-peptidylproline (omega=180) = [protein]-peptidylproline (omega=0). Inhibited by both FK506 and rapamycin. PPIase that acts as a histone chaperone. Histone proline isomerase that increases the rate of cis-trans isomerization at prolines on the histone H3 N-terminal tail. Proline isomerization influences H3 methylation thereby regulating gene expression. This chain is FK506-binding protein 4 (FKBP4), found in Rhizopus delemar (strain RA 99-880 / ATCC MYA-4621 / FGSC 9543 / NRRL 43880) (Mucormycosis agent).